Consider the following 90-residue polypeptide: Probable Fe(2+)-trafficking protein (90 aa).

The protein belongs to the Fe(2+)-trafficking protein family.

Could be a mediator in iron transactions between iron acquisition and iron-requiring processes, such as synthesis and/or repair of Fe-S clusters in biosynthetic enzymes. The chain is Probable Fe(2+)-trafficking protein from Verminephrobacter eiseniae (strain EF01-2).